Consider the following 262-residue polypeptide: Large ribosomal subunit protein eL8B (262 aa).

Positions 1-36 are disordered; the sequence is MAPKGKKVAPAPLATKSAKSSESKNPLFESTPKNFG.

This sequence belongs to the eukaryotic ribosomal protein eL8 family. As to quaternary structure, component of the large ribosomal subunit. Mature ribosomes consist of a small (40S) and a large (60S) subunit. The 40S subunit contains about 32 different proteins and 1 molecule of RNA (18S). The 60S subunit contains 45 different proteins and 3 molecules of RNA (25S, 5.8S and 5S).

The protein resides in the cytoplasm. Functionally, component of the ribosome, a large ribonucleoprotein complex responsible for the synthesis of proteins in the cell. The small ribosomal subunit (SSU) binds messenger RNAs (mRNAs) and translates the encoded message by selecting cognate aminoacyl-transfer RNA (tRNA) molecules. The large subunit (LSU) contains the ribosomal catalytic site termed the peptidyl transferase center (PTC), which catalyzes the formation of peptide bonds, thereby polymerizing the amino acids delivered by tRNAs into a polypeptide chain. The nascent polypeptides leave the ribosome through a tunnel in the LSU and interact with protein factors that function in enzymatic processing, targeting, and the membrane insertion of nascent chains at the exit of the ribosomal tunnel. This is Large ribosomal subunit protein eL8B from Candida albicans (strain SC5314 / ATCC MYA-2876) (Yeast).